The chain runs to 72 residues: DNA-directed RNA polymerase subunit omega (72 aa).

It belongs to the RNA polymerase subunit omega family. As to quaternary structure, the RNAP catalytic core consists of 2 alpha, 1 beta, 1 beta' and 1 omega subunit. When a sigma factor is associated with the core the holoenzyme is formed, which can initiate transcription.

The enzyme catalyses RNA(n) + a ribonucleoside 5'-triphosphate = RNA(n+1) + diphosphate. Functionally, promotes RNA polymerase assembly. Latches the N- and C-terminal regions of the beta' subunit thereby facilitating its interaction with the beta and alpha subunits. This Lactobacillus johnsonii (strain CNCM I-12250 / La1 / NCC 533) protein is DNA-directed RNA polymerase subunit omega.